Consider the following 831-residue polypeptide: G-type lectin S-receptor-like serine/threonine-protein kinase At1g61390 (831 aa).

The signal sequence occupies residues 1–42 (MYKLPQRNCADKQEYTVHMRKMGMVIFACLLLLIIFPTFGYA). In terms of domain architecture, Bulb-type lectin spans 43–162 (DINTSSPLSI…VSGKTLWKSF (120 aa)). The Extracellular portion of the chain corresponds to 43–448 (DINTSSPLSI…SSELAGSNRT (406 aa)). Asn-45, Asn-71, Asn-106, and Asn-112 each carry an N-linked (GlcNAc...) asparagine glycan. The EGF-like; atypical domain occupies 298–334 (PTSSCDLYRACGPFGLCVRSRNPKCICLKGFVPKSDD). 2 disulfides stabilise this stretch: Cys-302–Cys-314 and Cys-308–Cys-322. N-linked (GlcNAc...) asparagine glycosylation is found at Asn-340, Asn-356, Asn-399, and Asn-446. In terms of domain architecture, PAN spans 353 to 439 (CHTNSSTKTQ…GESLSLRLAS (87 aa)). Cystine bridges form between Cys-392–Cys-413 and Cys-396–Cys-402. Residues 449–469 (KIILGTTVSLSIFVILVFAAY) form a helical membrane-spanning segment. At 470–831 (KSWRYRTKQN…EITQSVIQGR (362 aa)) the chain is on the cytoplasmic side. One can recognise a Protein kinase domain in the interval 520–803 (FSSSNKLGQG…ELPSPKQPTF (284 aa)). Residues 526 to 534 (LGQGGFGPV) and Lys-548 contribute to the ATP site. Phosphoserine is present on residues Ser-554 and Ser-569. Positions 609 to 626 (TLKFEIDWQKRFNIIQGV) are caM-binding. Asp-645 acts as the Proton acceptor in catalysis. Phosphoserine occurs at positions 649 and 662. Thr-679 carries the post-translational modification Phosphothreonine. 2 positions are modified to phosphoserine: Ser-722 and Ser-814.

This sequence belongs to the protein kinase superfamily. Ser/Thr protein kinase family.

It localises to the cell membrane. It catalyses the reaction L-seryl-[protein] + ATP = O-phospho-L-seryl-[protein] + ADP + H(+). It carries out the reaction L-threonyl-[protein] + ATP = O-phospho-L-threonyl-[protein] + ADP + H(+). This chain is G-type lectin S-receptor-like serine/threonine-protein kinase At1g61390, found in Arabidopsis thaliana (Mouse-ear cress).